A 592-amino-acid chain; its full sequence is Syntaxin-binding protein 3 (592 aa).

The interval 1–255 is mediates interaction with DOC2B; it reads MAPPVAERGL…STVLHELTFQ (255 aa).

It belongs to the STXBP/unc-18/SEC1 family. As to quaternary structure, interacts with DOC2B; the interaction is direct, occurs at the cell membrane, excludes interaction with STX4 and regulates glucose-stimulated insulin secretion. Interacts with STX4. Post-translationally, phosphorylated by PKC in platelets in response to thrombin stimulation; phosphorylation inhibits binding to STX4. As to expression, megakaryocytes and platelets.

The protein resides in the cytoplasm. The protein localises to the cytosol. It is found in the cell membrane. Together with STX4 and VAMP2, may play a role in insulin-dependent movement of GLUT4 and in docking/fusion of intracellular GLUT4-containing vesicles with the cell surface in adipocytes. The polypeptide is Syntaxin-binding protein 3 (STXBP3) (Homo sapiens (Human)).